Consider the following 1653-residue polypeptide: Protein TOPAZ1 (1653 aa).

3 disordered regions span residues 1–94 (MRPP…TDLV), 284–303 (YSVE…KSGK), and 415–442 (ISST…SETE). Residues 63–78 (GREETEGDKLAKENGK) are compositionally biased toward basic and acidic residues. The span at 423 to 442 (SDGHHMEKRSPRGDLRSETE) shows a compositional bias: basic and acidic residues.

As to expression, restricted to testis, where it localizes to germ cells.

The protein resides in the cytoplasm. It localises to the cytosol. Important for normal spermatogenesis and male fertility. Specifically required for progression to the post-meiotic stages of spermatocyte development. Seems to be necessary for normal expression levels of a number of testis-expressed gene transcripts, although its role in this process is unclear. This Mus musculus (Mouse) protein is Protein TOPAZ1.